Reading from the N-terminus, the 693-residue chain is MGLTQRELEIIRERLGREPTAAELAFFTSHWSEHCSYKSTKMWLRELPGSAPWVVRGRGTDAPLVEVAHGLYVSFKIESHNHPSAVDPYNGAATGVGGIIRDILTVGATPIALLVNLHFGPPEDPHAKWIFSNVIKGISDYGNRVGVPVVGGETWFDEDFTYTPIVLATCVGVVEAEAVPKGYVEPGDYIVVAGLGADRSGLGGSAFASKTLEGGEDLGAIQVADPLMGKKLIDVVKEVSRCVKFIKDLGGGGLATALAELSHWFSLGVEFHLDKLHVRDASALPEELLISETQERLIFVISPRDLPCLEEALRKYEVPYSIPGRFVKSDRVLVMWKGVKIVDIPISLADGAPEILWPQEPYQPSDIPEIPEPPIDKAIDIVLSSPNVAKKESIYMRFDFDVGVRTAVKPGEGDAAVLKLYQRGQLGLVVKGDANPRYTFLDPRLGAANAFVKAYRNVAVVGGVPLAAVDSINVGSPERPQVYWRFVQAVQGLKEAATELEVPIVGGKVSLYNEYMGRPIKPTVAVVVLGKIDDVSKANRALWHDGDKIYIWGVTKGEVGGSEYLKRVHGILAGRPPSIDYAAEKEIVAVIQSWLGKISGATDVGLGGLITALAKMAINSGIGGEIDVCKAPAETTRLDYLLFSESNGRFIATGAEGPGVAIGEAYGEEFVVKCGGTLIYKRGVEELKRLMSL.

Residue histidine 34 is part of the active site. Tyrosine 37 and lysine 76 together coordinate ATP. Glutamate 78 is a binding site for Mg(2+). Substrate contacts are provided by residues 79-82 and arginine 101; that span reads SHNH. The active-site Proton acceptor is the histidine 80. A Mg(2+)-binding site is contributed by aspartate 102. A substrate-binding site is contributed by glutamine 222. Aspartate 248 lines the Mg(2+) pocket. 292 to 294 serves as a coordination point for substrate; sequence ETQ. ATP-binding residues include aspartate 470 and glycine 507. Serine 510 is a substrate binding site.

This sequence belongs to the FGAMS family. In terms of assembly, monomer. Part of the FGAM synthase complex composed of 1 PurL, 1 PurQ and 2 PurS subunits.

It is found in the cytoplasm. It carries out the reaction N(2)-formyl-N(1)-(5-phospho-beta-D-ribosyl)glycinamide + L-glutamine + ATP + H2O = 2-formamido-N(1)-(5-O-phospho-beta-D-ribosyl)acetamidine + L-glutamate + ADP + phosphate + H(+). It participates in purine metabolism; IMP biosynthesis via de novo pathway; 5-amino-1-(5-phospho-D-ribosyl)imidazole from N(2)-formyl-N(1)-(5-phospho-D-ribosyl)glycinamide: step 1/2. Functionally, part of the phosphoribosylformylglycinamidine synthase complex involved in the purines biosynthetic pathway. Catalyzes the ATP-dependent conversion of formylglycinamide ribonucleotide (FGAR) and glutamine to yield formylglycinamidine ribonucleotide (FGAM) and glutamate. The FGAM synthase complex is composed of three subunits. PurQ produces an ammonia molecule by converting glutamine to glutamate. PurL transfers the ammonia molecule to FGAR to form FGAM in an ATP-dependent manner. PurS interacts with PurQ and PurL and is thought to assist in the transfer of the ammonia molecule from PurQ to PurL. This chain is Phosphoribosylformylglycinamidine synthase subunit PurL, found in Pyrobaculum islandicum (strain DSM 4184 / JCM 9189 / GEO3).